Consider the following 260-residue polypeptide: Flap endonuclease Xni (260 aa).

Position 105 (aspartate 105) interacts with Mg(2+). Positions 164 to 254 (SQFLDLLALA…LKDFRVNGPA (91 aa)) constitute a 5'-3' exonuclease domain. K(+) contacts are provided by leucine 172, alanine 173, proline 181, isoleucine 183, and isoleucine 186. Residues 185-190 (GIGPKS) are interaction with DNA.

Belongs to the Xni family. It depends on Mg(2+) as a cofactor. K(+) serves as cofactor.

Functionally, has flap endonuclease activity. During DNA replication, flap endonucleases cleave the 5'-overhanging flap structure that is generated by displacement synthesis when DNA polymerase encounters the 5'-end of a downstream Okazaki fragment. In Shewanella sp. (strain ANA-3), this protein is Flap endonuclease Xni.